The chain runs to 517 residues: MAALRLLASVLGRGVPAGGSGLALSQGCARCFATSPRLRAKFYADPVEMVKDISDGATVMIGGFGLCGIPENLIAALLRTRVKDLQVVSSNVGVEDFGLGLLLAARQVRRIVCSYVGENTLCESQYLAGELELELTPQGTLAERIRAGGAGVPAFYTPTGYGTLVQEGGAPIRYTPDGHLALMSQPREVREFNGDHFLLERAIRADFALVKGWKADRAGNVVFRRSARNFNVPMCKAADVTAVEVEEIVEVGAFPPEDIHVPNIYVDRVIKGQKYEKRIERLTILKEEDGDAGKEEDARTRIIRRAALEFEDGMYANLGIGIPLLASNFISPSMTVHLHSENGILGLGPFPTEDEVDADLINAGKQTVTVLPGGCFFASDDSFAMIRGGHIQLTMLGAMQVSKYGDLANWMIPGKKVKGMGGAMDLVSSQKTRVVVTMQHCTKDNTPKIMEKCTMPLTGKRCVDRIITEKAVFDVHRKKELTLRELWEGLTVDDIKKSTGCAFAVSPNLRPMQQVAP.

Residues 1 to 39 constitute a mitochondrion transit peptide; sequence MAALRLLASVLGRGVPAGGSGLALSQGCARCFATSPRLR. Residue Glu-341 is the 5-glutamyl coenzyme A thioester intermediate of the active site.

This sequence belongs to the 3-oxoacid CoA-transferase family. As to quaternary structure, homodimer. Testis specific.

It localises to the mitochondrion. The catalysed reaction is a 3-oxo acid + succinyl-CoA = a 3-oxoacyl-CoA + succinate. It participates in ketone metabolism; succinyl-CoA degradation; acetoacetyl-CoA from succinyl-CoA: step 1/1. Functionally, key enzyme for ketone body catabolism. Transfers the CoA moiety from succinate to acetoacetate. Formation of the enzyme-CoA intermediate proceeds via an unstable anhydride species formed between the carboxylate groups of the enzyme and substrate. The polypeptide is Succinyl-CoA:3-ketoacid coenzyme A transferase 2, mitochondrial (OXCT2) (Homo sapiens (Human)).